Reading from the N-terminus, the 364-residue chain is MDRSNREHHSHRDHREHRDSKEPPTMAFHMKTWKTINKPLRAFAKLLRENTTVTFTPQPAIIIQSAKNHLVLKLIIHAECLYITDTDHFSTKTINNFVPLFDSFMGIISNPDVTKLYIQHDSDLYTRFLVTASDICAQASIPCVNGQEIVRESGKSALRIDLDHSTVTEILKWLAPVTKNKRSNKNEMTLAQIVVQVNPPSIKFLTDLNEIEFAHSGKVVFHDAKCMRLVLSSKNLQQAFSTCAVLKSSCSLRAIAGKEYKLFLIAKNVFLTVEAYLSQEQVKDDPKFERQAKTEEKGEKNHKVEEGNNFFCKQETQHKITSYMVPTKNGGTGTNFFNEKEDSESDDSAHFDYTPNSKRQRCGM.

3 disordered regions span residues 1 to 24 (MDRSNREHHSHRDHREHRDSKEPP), 284 to 306 (DDPKFERQAKTEEKGEKNHKVEE), and 325 to 364 (VPTKNGGTGTNFFNEKEDSESDDSAHFDYTPNSKRQRCGM).

The protein belongs to the herpesviridae polymerase accessory protein family.

Accessory subunit of the DNA polymerase that acts to increase the processivity of polymerization. The chain is DNA polymerase processivity factor (U27) from Homo sapiens (Human).